Consider the following 204-residue polypeptide: RNA-free ribonuclease P (204 aa).

This sequence belongs to the HARP family.

It catalyses the reaction Endonucleolytic cleavage of RNA, removing 5'-extranucleotides from tRNA precursor.. In terms of biological role, RNA-free RNase P that catalyzes the removal of the 5'-leader sequence from pre-tRNA to produce the mature 5'-terminus. The protein is RNA-free ribonuclease P of Pyrococcus abyssi (strain GE5 / Orsay).